The sequence spans 91 residues: MKFSIAAIALAAVAVASPVEMEPRTNPSTCNINGNNNGKVVCCNSLIPILGQILCNIAVLGSTCNAGQTVRCCETDANGGLINISLLNCVG.

The N-terminal stretch at 1 to 16 (MKFSIAAIALAAVAVA) is a signal peptide. Disulfide bonds link Cys-30/Cys-72, Cys-42/Cys-64, Cys-43/Cys-55, and Cys-73/Cys-89. N-linked (GlcNAc...) asparagine glycosylation occurs at Asn-83.

It belongs to the fungal hydrophobin family.

It is found in the secreted. It localises to the cell wall. Its subcellular location is the vacuole. The protein localises to the cytoplasmic vesicle. Functionally, aerial growth, conidiation, and dispersal of filamentous fungi in the environment rely upon a capability of their secreting small amphipathic proteins called hydrophobins (HPBs) with low sequence identity. Class I can self-assemble into an outermost layer of rodlet bundles on aerial cell surfaces, conferring cellular hydrophobicity that supports fungal growth, development and dispersal; whereas Class II form highly ordered films at water-air interfaces through intermolecular interactions but contribute nothing to the rodlet structure. Hyd1E contributes to certain cell wall-related features, such as hydrophobicity but is not involved in cell wall-related events during fungal proliferation in host hemocoel. Does not contribute to conidial hydrophobicity. This Beauveria bassiana (strain ARSEF 2860) (White muscardine disease fungus) protein is Class I hydrophobin E.